The sequence spans 99 residues: Ubiquitin-related modifier 1 homolog (99 aa).

1-thioglycine is present on Gly-99. Gly-99 participates in a covalent cross-link: Glycyl lysine isopeptide (Gly-Lys) (interchain with K-? in acceptor proteins).

The protein belongs to the URM1 family. In terms of assembly, interacts with cer. In terms of processing, C-terminal thiocarboxylation occurs in 2 steps, it is first acyl-adenylated (-COAMP) via the hesA/moeB/thiF part of the MOCS3 homolog, then thiocarboxylated (-COSH) via the rhodanese domain of the MOCS3 homolog.

It localises to the cytoplasm. It participates in tRNA modification; 5-methoxycarbonylmethyl-2-thiouridine-tRNA biosynthesis. Functionally, acts as a sulfur carrier required for 2-thiolation of mcm(5)S(2)U at tRNA wobble positions of cytosolic tRNA(Lys), tRNA(Glu) and tRNA(Gln). Serves as sulfur donor in tRNA 2-thiolation reaction by being thiocarboxylated (-COSH) at its C-terminus by MOCS3. The sulfur is then transferred to tRNA to form 2-thiolation of mcm(5)S(2)U. Also acts as a ubiquitin-like protein (UBL) that is covalently conjugated via an isopeptide bond to lysine residues of target proteins such as Prx2/Jafrac1, Ciao1, Eip71CD and GILT1. The thiocarboxylated form serves as substrate for conjugation and oxidative stress specifically induces the formation of UBL-protein conjugates. The protein is Ubiquitin-related modifier 1 homolog of Drosophila persimilis (Fruit fly).